The primary structure comprises 217 residues: Thiamine-phosphate synthase (217 aa).

4-amino-2-methyl-5-(diphosphooxymethyl)pyrimidine contacts are provided by residues 41 to 45 and N76; that span reads QYRDK. Mg(2+)-binding residues include D77 and D96. S115 serves as a coordination point for 4-amino-2-methyl-5-(diphosphooxymethyl)pyrimidine. Position 142-144 (142-144) interacts with 2-[(2R,5Z)-2-carboxy-4-methylthiazol-5(2H)-ylidene]ethyl phosphate; the sequence is SPS. K145 contacts 4-amino-2-methyl-5-(diphosphooxymethyl)pyrimidine. 2-[(2R,5Z)-2-carboxy-4-methylthiazol-5(2H)-ylidene]ethyl phosphate contacts are provided by residues G172 and 192–193; that span reads IS.

This sequence belongs to the thiamine-phosphate synthase family. The cofactor is Mg(2+).

It carries out the reaction 2-[(2R,5Z)-2-carboxy-4-methylthiazol-5(2H)-ylidene]ethyl phosphate + 4-amino-2-methyl-5-(diphosphooxymethyl)pyrimidine + 2 H(+) = thiamine phosphate + CO2 + diphosphate. It catalyses the reaction 2-(2-carboxy-4-methylthiazol-5-yl)ethyl phosphate + 4-amino-2-methyl-5-(diphosphooxymethyl)pyrimidine + 2 H(+) = thiamine phosphate + CO2 + diphosphate. The catalysed reaction is 4-methyl-5-(2-phosphooxyethyl)-thiazole + 4-amino-2-methyl-5-(diphosphooxymethyl)pyrimidine + H(+) = thiamine phosphate + diphosphate. Its pathway is cofactor biosynthesis; thiamine diphosphate biosynthesis; thiamine phosphate from 4-amino-2-methyl-5-diphosphomethylpyrimidine and 4-methyl-5-(2-phosphoethyl)-thiazole: step 1/1. In terms of biological role, condenses 4-methyl-5-(beta-hydroxyethyl)thiazole monophosphate (THZ-P) and 2-methyl-4-amino-5-hydroxymethyl pyrimidine pyrophosphate (HMP-PP) to form thiamine monophosphate (TMP). In Acidithiobacillus ferrooxidans (strain ATCC 23270 / DSM 14882 / CIP 104768 / NCIMB 8455) (Ferrobacillus ferrooxidans (strain ATCC 23270)), this protein is Thiamine-phosphate synthase.